A 116-amino-acid polypeptide reads, in one-letter code: MMKLYSLVIIATLAAAAFAATKQEIAAAALSGMVHDFEQYAKRAEGEEEPKRYIRCSKQLGEKCDLNCECCGASAVCEDYNYICKEKVSDNPVLDWFGQGLNAMGNAISRYYCDAE.

The signal sequence occupies residues 1–19; that stretch reads MMKLYSLVIIATLAAAAFA. Disulfide bonds link Cys-56-Cys-71, Cys-64-Cys-77, Cys-68-Cys-113, and Cys-70-Cys-84.

It belongs to the neurotoxin 25 family. ICK-8 subfamily. Expressed by the venom gland.

The protein resides in the secreted. Its function is as follows. Ion channel inhibitor. The sequence is that of Toxin ICK-10 from Trittame loki (Brush-footed trapdoor spider).